Reading from the N-terminus, the 374-residue chain is Putative F-box/kelch-repeat protein At4g39756 (374 aa).

Residues 17 to 63 (CPSFLSLPEEILVNCLARIPKSYYPKLSLVCKSFCSLILSMELYVER) form the F-box domain. 4 Kelch repeats span residues 135–180 (ELYA…VING), 181–227 (KIYV…GMAV), 231–278 (KIYV…RQSC), and 280–308 (WYDTKHKEWRDIKGLATLNRRRRSSILEV).

This chain is Putative F-box/kelch-repeat protein At4g39756, found in Arabidopsis thaliana (Mouse-ear cress).